A 166-amino-acid chain; its full sequence is Large ribosomal subunit protein uL10 (166 aa).

The protein belongs to the universal ribosomal protein uL10 family. Part of the ribosomal stalk of the 50S ribosomal subunit. The N-terminus interacts with L11 and the large rRNA to form the base of the stalk. The C-terminus forms an elongated spine to which L12 dimers bind in a sequential fashion forming a multimeric L10(L12)X complex.

Forms part of the ribosomal stalk, playing a central role in the interaction of the ribosome with GTP-bound translation factors. The chain is Large ribosomal subunit protein uL10 from Ureaplasma parvum serovar 3 (strain ATCC 27815 / 27 / NCTC 11736).